Reading from the N-terminus, the 429-residue chain is Histidine--tRNA ligase (429 aa).

It belongs to the class-II aminoacyl-tRNA synthetase family. As to quaternary structure, homodimer.

It localises to the cytoplasm. The catalysed reaction is tRNA(His) + L-histidine + ATP = L-histidyl-tRNA(His) + AMP + diphosphate + H(+). In Streptococcus pneumoniae serotype 19F (strain G54), this protein is Histidine--tRNA ligase.